The primary structure comprises 156 residues: Glutamine--fructose-6-phosphate aminotransferase [isomerizing] (156 aa).

In terms of domain architecture, SIS spans 4-146 (MAHHIVPARD…VLKGTDVDQP (143 aa)). Lysine 151 acts as the For Fru-6P isomerization activity in catalysis.

In terms of assembly, homodimer.

The protein localises to the cytoplasm. The catalysed reaction is D-fructose 6-phosphate + L-glutamine = D-glucosamine 6-phosphate + L-glutamate. In terms of biological role, catalyzes the first step in hexosamine metabolism, converting fructose-6P into glucosamine-6P using glutamine as a nitrogen source. The chain is Glutamine--fructose-6-phosphate aminotransferase [isomerizing] (glmS) from Sphingobium yanoikuyae (Sphingomonas yanoikuyae).